The primary structure comprises 314 residues: Ribosomal RNA small subunit methyltransferase H (314 aa).

Residues 36–38 (GGH), D56, F80, D102, and Q109 contribute to the S-adenosyl-L-methionine site.

It belongs to the methyltransferase superfamily. RsmH family.

It localises to the cytoplasm. It catalyses the reaction cytidine(1402) in 16S rRNA + S-adenosyl-L-methionine = N(4)-methylcytidine(1402) in 16S rRNA + S-adenosyl-L-homocysteine + H(+). Specifically methylates the N4 position of cytidine in position 1402 (C1402) of 16S rRNA. The protein is Ribosomal RNA small subunit methyltransferase H of Citrobacter koseri (strain ATCC BAA-895 / CDC 4225-83 / SGSC4696).